A 354-amino-acid polypeptide reads, in one-letter code: Uroporphyrinogen decarboxylase (354 aa).

Substrate-binding positions include 27 to 31 (RQAGR), Asp-77, Tyr-154, Thr-209, and His-327.

Belongs to the uroporphyrinogen decarboxylase family. In terms of assembly, homodimer.

The protein localises to the cytoplasm. The catalysed reaction is uroporphyrinogen III + 4 H(+) = coproporphyrinogen III + 4 CO2. It participates in porphyrin-containing compound metabolism; protoporphyrin-IX biosynthesis; coproporphyrinogen-III from 5-aminolevulinate: step 4/4. Catalyzes the decarboxylation of four acetate groups of uroporphyrinogen-III to yield coproporphyrinogen-III. The protein is Uroporphyrinogen decarboxylase of Pseudomonas putida (strain GB-1).